The sequence spans 613 residues: Laccase 1 (613 aa).

A signal peptide spans 1-20 (MSRFARLLLIVALFFTNAWA). 2 Plastocyanin-like domains span residues 29 to 142 (ITWK…IRPK) and 171 to 359 (YLVV…MRIP). Asn74 carries N-linked (GlcNAc...) asparagine glycosylation. Cu cation contacts are provided by His78, His80, His122, and His124. Residues Asn256, Asn279, Asn444, Asn468, and Asn484 are each glycosylated (N-linked (GlcNAc...) asparagine). The Plastocyanin-like 3 domain maps to 468 to 598 (NATRDTENDG…GGMGIAILDG (131 aa)). Residues His506, His509, and His511 each contribute to the Cu cation site. N-linked (GlcNAc...) asparagine glycosylation occurs at Asn526. Cu cation is bound by residues His580, Cys581, His582, and His586.

This sequence belongs to the multicopper oxidase family. Cu cation serves as cofactor.

It is found in the cell surface. Its pathway is pigment biosynthesis. Its function is as follows. Laccase; part of the Pks1 gene cluster that mediates the biosynthesis of an anthraquinone derivative pigment that contributes to conidial pigmentation that provides protection from UV radiation, heat and cold stress. The polyketide synthase Pks1 produces 1-acetyl-2,4,6,8-tetrahydroxy-9,10-anthraquinone though condensation of acetyl-CoA with malonyl-CoA. The dehydratase EthD and the laccase Mlac1 further convert the anthraquinone derivative into the final conidial pigment. In Metarhizium robertsii (strain ARSEF 23 / ATCC MYA-3075) (Metarhizium anisopliae (strain ARSEF 23)), this protein is Laccase 1.